The chain runs to 207 residues: MTRTKKNPPLRVGVGGPVGSGKTTLLEMLCKAMRDRYDLVAITNDIYTKEDQRLLTISGALPAERIMGVETGGCPHTAIREDASINLEAVDRMLAKFPDADVVFIESGGDNLAATFSPELSDLTIYVIDVAGGEKIPRKGGPGITKSDLLVINKTDLAPYVGASLEIMESDARKMRGERPFVMGSVKSGQGLDQVIAFIERQGMLDV.

Glycine 16 to threonine 23 contributes to the GTP binding site.

Belongs to the SIMIBI class G3E GTPase family. UreG subfamily. As to quaternary structure, homodimer. UreD, UreF and UreG form a complex that acts as a GTP-hydrolysis-dependent molecular chaperone, activating the urease apoprotein by helping to assemble the nickel containing metallocenter of UreC. The UreE protein probably delivers the nickel.

The protein resides in the cytoplasm. Its function is as follows. Facilitates the functional incorporation of the urease nickel metallocenter. This process requires GTP hydrolysis, probably effectuated by UreG. This chain is Urease accessory protein UreG, found in Cupriavidus metallidurans (strain ATCC 43123 / DSM 2839 / NBRC 102507 / CH34) (Ralstonia metallidurans).